Consider the following 153-residue polypeptide: Large ribosomal subunit protein uL15 (153 aa).

Residues Met-1–Pro-47 are disordered.

It belongs to the universal ribosomal protein uL15 family. As to quaternary structure, part of the 50S ribosomal subunit.

Its function is as follows. Binds to the 23S rRNA. The protein is Large ribosomal subunit protein uL15 of Dehalococcoides mccartyi (strain ATCC BAA-2100 / JCM 16839 / KCTC 5957 / BAV1).